A 257-amino-acid chain; its full sequence is Acetylglutamate kinase (257 aa).

Substrate-binding positions include 43–44 (GG), arginine 65, and asparagine 157. ATP is bound by residues 180 to 185 (DVSGIL) and 208 to 210 (IIT).

Belongs to the acetylglutamate kinase family. ArgB subfamily. Homodimer.

It is found in the cytoplasm. It catalyses the reaction N-acetyl-L-glutamate + ATP = N-acetyl-L-glutamyl 5-phosphate + ADP. It functions in the pathway amino-acid biosynthesis; L-arginine biosynthesis; N(2)-acetyl-L-ornithine from L-glutamate: step 2/4. Catalyzes the ATP-dependent phosphorylation of N-acetyl-L-glutamate. The polypeptide is Acetylglutamate kinase (Klebsiella pneumoniae (strain 342)).